Reading from the N-terminus, the 567-residue chain is Urease subunit alpha (567 aa).

The region spanning 129-567 is the Urease domain; sequence GGIDVHVHFI…VPMSQRYFLF (439 aa). The Ni(2+) site is built by H134, H136, and K217. An N6-carboxylysine modification is found at K217. A substrate-binding site is contributed by H219. Ni(2+) is bound by residues H246 and H272. Residue H320 is the Proton donor of the active site. A Ni(2+)-binding site is contributed by D360.

It belongs to the metallo-dependent hydrolases superfamily. Urease alpha subunit family. In terms of assembly, heterotrimer of UreA (gamma), UreB (beta) and UreC (alpha) subunits. Three heterotrimers associate to form the active enzyme. It depends on Ni cation as a cofactor. Carboxylation allows a single lysine to coordinate two nickel ions.

The protein localises to the cytoplasm. It carries out the reaction urea + 2 H2O + H(+) = hydrogencarbonate + 2 NH4(+). Its pathway is nitrogen metabolism; urea degradation; CO(2) and NH(3) from urea (urease route): step 1/1. The sequence is that of Urease subunit alpha from Blochmanniella floridana.